The following is a 397-amino-acid chain: Keratinocyte differentiation factor 1 (397 aa).

Over residues 1–16 (MPRPGQPRPSSGPPRL) the composition is skewed to pro residues. Disordered stretches follow at residues 1 to 67 (MPRP…SAEP), 124 to 158 (EAAWAKEHNGVPPSPDRAPPSRRDGQKLKTSMGSS), and 191 to 214 (PLADPPPTRHSLPSTFTSSPRGSE). Over residues 44–55 (RPDPKDPGHHGP) the composition is skewed to basic and acidic residues. A compositionally biased stretch (polar residues) spans 201–211 (SLPSTFTSSPR). The residue at position 218 (Ser-218) is a Phosphoserine. 2 disordered regions span residues 304-339 (ISTRKSRSRPQTSEGRSARSTAPAAAPDSGHETMVG) and 361-392 (ARKLRPYGAPGYPASQDSSFQGTDTDSSGAPL). Residues 321–330 (ARSTAPAAAP) show a composition bias toward low complexity. The segment covering 375–388 (SQDSSFQGTDTDSS) has biased composition (polar residues).

It is found in the cytoplasm. It localises to the cell junction. Functionally, plays a role in the regulation of the epidermis formation during early development. Required both as an inhibitor of basal cell proliferation and a promoter of differentiation of basal progenitor cell progeny. The polypeptide is Keratinocyte differentiation factor 1 (Kdf1) (Rattus norvegicus (Rat)).